Reading from the N-terminus, the 574-residue chain is Proline--tRNA ligase (574 aa).

Belongs to the class-II aminoacyl-tRNA synthetase family. ProS type 1 subfamily. In terms of assembly, homodimer.

It is found in the cytoplasm. The catalysed reaction is tRNA(Pro) + L-proline + ATP = L-prolyl-tRNA(Pro) + AMP + diphosphate. Its function is as follows. Catalyzes the attachment of proline to tRNA(Pro) in a two-step reaction: proline is first activated by ATP to form Pro-AMP and then transferred to the acceptor end of tRNA(Pro). As ProRS can inadvertently accommodate and process non-cognate amino acids such as alanine and cysteine, to avoid such errors it has two additional distinct editing activities against alanine. One activity is designated as 'pretransfer' editing and involves the tRNA(Pro)-independent hydrolysis of activated Ala-AMP. The other activity is designated 'posttransfer' editing and involves deacylation of mischarged Ala-tRNA(Pro). The misacylated Cys-tRNA(Pro) is not edited by ProRS. The protein is Proline--tRNA ligase of Marinomonas sp. (strain MWYL1).